A 333-amino-acid polypeptide reads, in one-letter code: Na(+)/H(+) exchange regulatory cofactor NHE-RF1 (333 aa).

One can recognise a PDZ 1 domain in the interval 13–93 (LCCMEKGPDG…AVRLLVVQPQ (81 aa)). 2 disordered regions span residues 90-164 (VQPQ…RAVD) and 232-333 (LAGP…FSNL). The span at 97–111 (QPPKTHSDPDGEAQR) shows a compositional bias: basic and acidic residues. A compositionally biased stretch (low complexity) spans 112 to 122 (EPPAAETPAAE). Positions 124–133 (SGPEERELRP) are enriched in basic and acidic residues. In terms of domain architecture, PDZ 2 spans 135–215 (LCRIKKGPNG…ETKLLVVGVL (81 aa)). Basic and acidic residues-rich tracts occupy residues 274 to 289 (SETHSEPDTQEGDKRS) and 323 to 333 (WSKKNELFSNL).

The protein resides in the endomembrane system. The protein localises to the cell projection. Its subcellular location is the filopodium. It is found in the ruffle. It localises to the microvillus. In terms of biological role, scaffold protein that connects plasma membrane proteins with members of the ezrin/moesin/radixin family and thereby helps to link them to the actin cytoskeleton and to regulate their surface expression. Was first known to play a role in the regulation of the activity and subcellular location of SLC9A3. May enhance Wnt signaling. The chain is Na(+)/H(+) exchange regulatory cofactor NHE-RF1 (NHERF1) from Gallus gallus (Chicken).